Consider the following 741-residue polypeptide: Nuclear poly(A) polymerase 4 (741 aa).

ATP-binding positions include 101-103 (FGS), 113-116 (ADID), 114-116 (DID), aspartate 169, lysine 230, tyrosine 239, and 248-249 (GV). Mg(2+) contacts are provided by aspartate 114, aspartate 116, and aspartate 169. The Nuclear localization signal signature appears at 485–492 (RRRQLPPF). 2 disordered regions span residues 494–556 (FPNG…LSPQ) and 683–741 (YEGF…RLLT). The span at 534 to 551 (KNDSEMMDVRPEKPEKRA) shows a compositional bias: basic and acidic residues. The span at 701–717 (LYSQSGMSEDLQSNSLV) shows a compositional bias: polar residues. Residues 721–731 (EKSEDRARSES) show a composition bias toward basic and acidic residues. The segment covering 732–741 (FQKSQIRLLT) has biased composition (polar residues).

The protein belongs to the poly(A) polymerase family. In terms of assembly, monomer. Forms a complex with cleavage and polyadenylation specificity factor (CPSF) subunits CFIS2, FIPS3, PAPS1, PABN1, PABN2, PABN3 and FIPS5. Mg(2+) is required as a cofactor. It depends on Mn(2+) as a cofactor. In terms of tissue distribution, mostly expressed in flowers (very active in pollen, sepals, styles, and stigmas), cotyledons and hypocotyls, and, to a lower extent, in roots (confined to the vascular tissue in the radicle) and leaves (in the vascular tissue and leaf petioles). Barely detected in stems. Active in the primary and secondary root systems.

The protein localises to the nucleus. The enzyme catalyses RNA(n) + ATP = RNA(n)-3'-adenine ribonucleotide + diphosphate. Its function is as follows. Essential protein. Polymerase that creates the 3'-poly(A) tail of mRNA's. Also required for the endoribonucleolytic cleavage reaction at some polyadenylation sites. May acquire specificity through interaction with a cleavage and polyadenylation specificity factor (CPSF) at its C-terminus. In Arabidopsis thaliana (Mouse-ear cress), this protein is Nuclear poly(A) polymerase 4.